The chain runs to 149 residues: Large-conductance mechanosensitive channel (149 aa).

2 helical membrane passes run 8 to 28 and 74 to 94; these read FIMRGSVLDLAVGVVIGSAFT and IGSVISALITFLITAFVLFLI.

The protein belongs to the MscL family. In terms of assembly, homopentamer.

It localises to the cell membrane. Its function is as follows. Channel that opens in response to stretch forces in the membrane lipid bilayer. May participate in the regulation of osmotic pressure changes within the cell. The chain is Large-conductance mechanosensitive channel from Enterococcus faecalis (strain ATCC 700802 / V583).